Consider the following 375-residue polypeptide: 4-hydroxy-3-methylbut-2-en-1-yl diphosphate synthase (flavodoxin) (375 aa).

Residues C275, C278, C310, and E317 each coordinate [4Fe-4S] cluster.

The protein belongs to the IspG family. It depends on [4Fe-4S] cluster as a cofactor.

It carries out the reaction (2E)-4-hydroxy-3-methylbut-2-enyl diphosphate + oxidized [flavodoxin] + H2O + 2 H(+) = 2-C-methyl-D-erythritol 2,4-cyclic diphosphate + reduced [flavodoxin]. It functions in the pathway isoprenoid biosynthesis; isopentenyl diphosphate biosynthesis via DXP pathway; isopentenyl diphosphate from 1-deoxy-D-xylulose 5-phosphate: step 5/6. Its function is as follows. Converts 2C-methyl-D-erythritol 2,4-cyclodiphosphate (ME-2,4cPP) into 1-hydroxy-2-methyl-2-(E)-butenyl 4-diphosphate. The protein is 4-hydroxy-3-methylbut-2-en-1-yl diphosphate synthase (flavodoxin) of Ruegeria pomeroyi (strain ATCC 700808 / DSM 15171 / DSS-3) (Silicibacter pomeroyi).